The chain runs to 534 residues: Phosphoenolpyruvate carboxykinase (ATP) (534 aa).

Arg59, Tyr200, and Lys206 together coordinate substrate. ATP contacts are provided by residues Lys206, His225, and 242–250; that span reads GLSGTGKTT. The Mn(2+) site is built by Lys206 and His225. Residue Asp263 coordinates Mn(2+). ATP is bound by residues Glu291, Arg327, 443–444, and Thr449; that span reads RI. Arg327 is a substrate binding site.

Belongs to the phosphoenolpyruvate carboxykinase (ATP) family. It depends on Mn(2+) as a cofactor.

The protein localises to the cytoplasm. It carries out the reaction oxaloacetate + ATP = phosphoenolpyruvate + ADP + CO2. It participates in carbohydrate biosynthesis; gluconeogenesis. Involved in the gluconeogenesis. Catalyzes the conversion of oxaloacetate (OAA) to phosphoenolpyruvate (PEP) through direct phosphoryl transfer between the nucleoside triphosphate and OAA. In Lachnospira eligens (strain ATCC 27750 / DSM 3376 / VPI C15-48 / C15-B4) (Eubacterium eligens), this protein is Phosphoenolpyruvate carboxykinase (ATP).